The following is a 491-amino-acid chain: MKLKELMQAIPVYTGEASAAIEVNQIAQDSRKVQPGTLFICIDGEIVDGHQFADRAVQLGAVAIIAEKQLDVSVPVLYVRDSKRAMAMLADYFYGSPTQALKLVGITGTNGKTTVSHLVEQIVRENGEQTGLIGTMYRKIGDEILETKNTTPDSLTLQETFRDMLLSGVSTAVMEVSSHALVQGRVYGSDYDVAVFMNLSQDHLDYHHTMEEYAYAKSLLFAQLGNSYNLSNPKIAVLNADDKESVRMQTATAAHIITFGIKEPADFSASNIQITSHGSTFDLKTPVGDFALKIKMIGNFSVYNVLAAIATSFALRIPVINAIATVESIPGVKGRFELVNAGQDFPVIVDYSHTPDSLLNVLQTIDEFAEKRVFVVVGCGGDRDKGKRPQMAKIAVDYATNPIFTSDNPRSEDPHAIIEDMIQGVPGSDSYVVHENRRDAIRYAVNMAEAGDVILIAGKGHEDYQVIGDEVIDFDDRVEARIAIEKKLGLA.

Ser-30 serves as a coordination point for UDP-N-acetyl-alpha-D-muramoyl-L-alanyl-D-glutamate. An ATP-binding site is contributed by Gly-108–Thr-114. Residues Asn-149, Thr-150–Thr-151, Ser-177, Gln-183, and Arg-185 contribute to the UDP-N-acetyl-alpha-D-muramoyl-L-alanyl-D-glutamate site. Lys-217 carries the post-translational modification N6-carboxylysine. Residues Arg-383, Asp-407–Arg-410, Gly-458, and Glu-462 each bind meso-2,6-diaminopimelate. The Meso-diaminopimelate recognition motif motif lies at Asp-407–Arg-410.

It belongs to the MurCDEF family. MurE subfamily. Requires Mg(2+) as cofactor. Post-translationally, carboxylation is probably crucial for Mg(2+) binding and, consequently, for the gamma-phosphate positioning of ATP.

It is found in the cytoplasm. The catalysed reaction is UDP-N-acetyl-alpha-D-muramoyl-L-alanyl-D-glutamate + meso-2,6-diaminopimelate + ATP = UDP-N-acetyl-alpha-D-muramoyl-L-alanyl-gamma-D-glutamyl-meso-2,6-diaminopimelate + ADP + phosphate + H(+). The protein operates within cell wall biogenesis; peptidoglycan biosynthesis. Functionally, catalyzes the addition of meso-diaminopimelic acid to the nucleotide precursor UDP-N-acetylmuramoyl-L-alanyl-D-glutamate (UMAG) in the biosynthesis of bacterial cell-wall peptidoglycan. This is UDP-N-acetylmuramoyl-L-alanyl-D-glutamate--2,6-diaminopimelate ligase from Listeria innocua serovar 6a (strain ATCC BAA-680 / CLIP 11262).